Here is a 213-residue protein sequence, read N- to C-terminus: Orotate phosphoribosyltransferase (213 aa).

K26 provides a ligand contact to 5-phospho-alpha-D-ribose 1-diphosphate. 34–35 is an orotate binding site; that stretch reads FF. 5-phospho-alpha-D-ribose 1-diphosphate contacts are provided by residues 72-73, R99, K100, K103, H105, and 124-132; these read YK and DDVITAGTA. Orotate is bound by residues T128 and R156.

Belongs to the purine/pyrimidine phosphoribosyltransferase family. PyrE subfamily. As to quaternary structure, homodimer. The cofactor is Mg(2+).

The enzyme catalyses orotidine 5'-phosphate + diphosphate = orotate + 5-phospho-alpha-D-ribose 1-diphosphate. It participates in pyrimidine metabolism; UMP biosynthesis via de novo pathway; UMP from orotate: step 1/2. Its function is as follows. Catalyzes the transfer of a ribosyl phosphate group from 5-phosphoribose 1-diphosphate to orotate, leading to the formation of orotidine monophosphate (OMP). The protein is Orotate phosphoribosyltransferase of Pseudomonas paraeruginosa (strain DSM 24068 / PA7) (Pseudomonas aeruginosa (strain PA7)).